A 281-amino-acid polypeptide reads, in one-letter code: MLFFEIIKAIIFGIVEGITEWLPISSTGHLILVEEFIHFNNANAAFTNMFNVVIQLGAILAVVVIYFDRLNPFKSGKTAREVQITWQLWAKVILSALPAAVIGLIFDDWLDAHFQNFFSVALMLILYGIAFIYVERRHQGVEPQVTHLVSLPYKTAFFIGLFQVLSLIPGTSRSGATILGGILLGTSRQVATEFTFFLGIPIMFGASLVKVLKFIVSGTILTGSQLFILLVAMLVAFAVSLYVIRFLTDYVKNHDFTFFGKYRIGLGILLLFYGLMKVLFG.

7 helical membrane passes run 45–65, 86–106, 114–134, 148–168, 196–216, 224–244, and 256–276; these read AFTNMFNVVIQLGAILAVVVI, WQLWAKVILSALPAAVIGLIF, FQNFFSVALMLILYGIAFIYV, LVSLPYKTAFFIGLFQVLSLI, FFLGIPIMFGASLVKVLKFIV, SQLFILLVAMLVAFAVSLYVI, and FTFFGKYRIGLGILLLFYGLM.

This sequence belongs to the UppP family.

Its subcellular location is the cell membrane. It catalyses the reaction di-trans,octa-cis-undecaprenyl diphosphate + H2O = di-trans,octa-cis-undecaprenyl phosphate + phosphate + H(+). Its function is as follows. Catalyzes the dephosphorylation of undecaprenyl diphosphate (UPP). Confers resistance to bacitracin. The sequence is that of Undecaprenyl-diphosphatase from Streptococcus mutans serotype c (strain ATCC 700610 / UA159).